Consider the following 389-residue polypeptide: Chromobox protein homolog 8 (389 aa).

A Chromo domain is found at 11-69 (FAAEALLKRRIRKGRMEYLVKWKGWSQKYSTWEPEENILDARLLAAFEEREREMELYGP). S110 and S130 each carry phosphoserine. The disordered stretch occupies residues 124 to 241 (LRNMGLSPPA…DDTPSGAGKF (118 aa)). Positions 145–189 (EAPRDRDRDRDRDRERDRERERERERERERERERERGTSRVDDKP) are enriched in basic and acidic residues. Phosphoserine occurs at positions 191, 256, 265, 311, 332, and 352. Residues 298–327 (GALDPNGTRVRHGSGPPSSGGGLYRDMGAQ) are disordered.

In terms of assembly, component of a PRC1-like complex. Interacts with RING1 RNF2, PCGF1, PCGF2, PCGF3, BMI1, PCGF5 and PCGF6. Interacts with MLLT3 and histone H3. Interacts with PHC2.

It is found in the nucleus. Its function is as follows. Component of a Polycomb group (PcG) multiprotein PRC1-like complex, a complex class required to maintain the transcriptionally repressive state of many genes, including Hox genes, throughout development. PcG PRC1 complex acts via chromatin remodeling and modification of histones; it mediates monoubiquitination of histone H2A 'Lys-119', rendering chromatin heritably changed in its expressibility. The sequence is that of Chromobox protein homolog 8 (CBX8) from Homo sapiens (Human).